We begin with the raw amino-acid sequence, 94 residues long: Selenoprotein K (94 aa).

Residues 20-42 (LSFLTDFFWGAVEFIGLFFQTLV) traverse the membrane as a helical segment. The disordered stretch occupies residues 48–94 (KDGNNSASSRFSDGRGPPGFPGRRRMGRINHGAGPTPPPMGGGGUGR). Polar residues predominate over residues 49–58 (DGNNSASSRF). A non-standard amino acid (selenocysteine) is located at residue U92.

It belongs to the selenoprotein K family.

The protein resides in the endoplasmic reticulum membrane. The protein localises to the cell membrane. In terms of biological role, required for Ca(2+) flux in immune cells and plays a role in T-cell proliferation and in T-cell and neutrophil migration. Involved in endoplasmic reticulum-associated degradation (ERAD) of soluble glycosylated proteins. Required for cell surface expression of CD36 and involved in macrophage uptake of low-density lipoprotein and in foam cell formation. Required for palmitoylation. In Danio rerio (Zebrafish), this protein is Selenoprotein K (selenok).